We begin with the raw amino-acid sequence, 566 residues long: Putative UDP-glucuronate:xylan alpha-glucuronosyltransferase 5 (566 aa).

A helical; Signal-anchor for type II membrane protein membrane pass occupies residues 17 to 37 (LILISLSFLGLLLNFKPLFLL). Residues Asp372 and Asp374 each contribute to the Mn(2+) site. Substrate-binding positions include 372 to 374 (DAD), 401 to 403 (NSG), 428 to 432 (NGGDQ), and 475 to 480 (HYLGLK). His475 lines the Mn(2+) pocket.

This sequence belongs to the glycosyltransferase 8 family. Glycogenin subfamily. The cofactor is Mn(2+).

The protein resides in the golgi apparatus membrane. In terms of biological role, may be involved in the substitutions of the xylan backbone in stem glucuronoxylan. In Arabidopsis thaliana (Mouse-ear cress), this protein is Putative UDP-glucuronate:xylan alpha-glucuronosyltransferase 5 (GUX5).